The chain runs to 90 residues: Phosphocarrier protein NPr (90 aa).

Residues 2–90 form the HPr domain; sequence TQYRRVAIKN…ALFESGFDED (89 aa). Histidine 16 serves as the catalytic Pros-phosphohistidine intermediate.

The protein belongs to the HPr family.

Its subcellular location is the cytoplasm. Its function is as follows. Component of the phosphoenolpyruvate-dependent nitrogen-metabolic phosphotransferase system (nitrogen-metabolic PTS), that seems to be involved in regulating nitrogen metabolism. The phosphoryl group from phosphoenolpyruvate (PEP) is transferred to the phosphoryl carrier protein NPr by enzyme I-Ntr. Phospho-NPr then transfers it to EIIA-Ntr. Could function in the transcriptional regulation of sigma-54 dependent operons in conjunction with the NPr (PtsO) and EIIA-Ntr (PtsN) proteins. The polypeptide is Phosphocarrier protein NPr (ptsO) (Proteus mirabilis (strain HI4320)).